The chain runs to 485 residues: Aspartyl/glutamyl-tRNA(Asn/Gln) amidotransferase subunit B (485 aa).

This sequence belongs to the GatB/GatE family. GatB subfamily. As to quaternary structure, heterotrimer of A, B and C subunits.

The catalysed reaction is L-glutamyl-tRNA(Gln) + L-glutamine + ATP + H2O = L-glutaminyl-tRNA(Gln) + L-glutamate + ADP + phosphate + H(+). It carries out the reaction L-aspartyl-tRNA(Asn) + L-glutamine + ATP + H2O = L-asparaginyl-tRNA(Asn) + L-glutamate + ADP + phosphate + 2 H(+). Its function is as follows. Allows the formation of correctly charged Asn-tRNA(Asn) or Gln-tRNA(Gln) through the transamidation of misacylated Asp-tRNA(Asn) or Glu-tRNA(Gln) in organisms which lack either or both of asparaginyl-tRNA or glutaminyl-tRNA synthetases. The reaction takes place in the presence of glutamine and ATP through an activated phospho-Asp-tRNA(Asn) or phospho-Glu-tRNA(Gln). This is Aspartyl/glutamyl-tRNA(Asn/Gln) amidotransferase subunit B from Cupriavidus taiwanensis (strain DSM 17343 / BCRC 17206 / CCUG 44338 / CIP 107171 / LMG 19424 / R1) (Ralstonia taiwanensis (strain LMG 19424)).